We begin with the raw amino-acid sequence, 61 residues long: Large ribosomal subunit protein uL29 (61 aa).

This sequence belongs to the universal ribosomal protein uL29 family.

The sequence is that of Large ribosomal subunit protein uL29 from Campylobacter jejuni subsp. jejuni serotype O:6 (strain 81116 / NCTC 11828).